The following is a 172-amino-acid chain: uncharacterized protein (172 aa).

A run of 4 helical transmembrane segments spans residues 46–66 (MFSIIFSFLYLLLIVPLFLYP), 76–96 (LLSLFYCAYVMYFLPLEVGLF), 104–124 (WKFLFILNIGVTALITVLGWS), and 129–149 (FFYAFLNIRTLVCGITIFTEI).

It is found in the endoplasmic reticulum membrane. This is an uncharacterized protein from Schizosaccharomyces pombe (strain 972 / ATCC 24843) (Fission yeast).